A 278-amino-acid polypeptide reads, in one-letter code: MCRRPDCGFSFSPGPVILLWCCLLLPIVSSAAVSVAPTATEKVPAECPELTRRCLLGEVFQGDKYESWLRPLVNVTGRDGPLSQLIRYRPVTPEAANSVLLDEAFLDTLALLYNNPDQLRALLTLLSSDTAPRWMTVMRGYSECGDGSPAVYTCVDDLCRGYDLTRLSYERSIFTEHVLGFELVPPSLFNVVVAIRNEATRTNRAVRLPVSTAAAPEGITLFYGLYNAVKEFCLRHQLDPPLLRHLDKYYAGLPPELKQTRVNLPAHSRYGPQAVDAR.

The first 30 residues, 1 to 30 (MCRRPDCGFSFSPGPVILLWCCLLLPIVSS), serve as a signal peptide directing secretion. Positions 43-256 (VPAECPELTR…DKYYAGLPPE (214 aa)) constitute a gL betaherpesvirus-type domain. A disulfide bridge links C154 with C159.

Belongs to the herpesviridae glycoprotein L (gL) family. Betaherpesvirinae gL subfamily. In terms of assembly, interacts with glycoprotein H (gH); this interaction is necessary for the correct processing and cell surface expression of gH. Forms the envelope pentamer complex (PC) composed of gH, gL, UL128, UL130, and UL131A. The pentamer interacts with host NRP2. Forms the envelope trimer complex composed of gH, gL, and gO. The trimer interacts with host PDGFRA.

The protein resides in the virion membrane. The protein localises to the host cell membrane. It localises to the host Golgi apparatus. Its subcellular location is the host trans-Golgi network. The heterodimer glycoprotein H-glycoprotein L is required for the fusion of viral and plasma membranes leading to virus entry into the host cell. Acts as a functional inhibitor of gH and maintains gH in an inhibited form. Upon binding to host integrins, gL dissociates from gH leading to activation of the viral fusion glycoproteins gB and gH. In human cytomegalovirus, forms two distincts complexes to mediate viral entry, a trimer and a pentamer at the surface of the virion envelope. The gH-gL-gO trimer is required for infection in fibroblasts by interacting with host PDGFRA. The gH-gL-UL128-UL130-UL131A pentamer is essential for viral entry in epithelial, endothelial and myeloid cells via interaction with host NRP2. The protein is Envelope glycoprotein L of Human cytomegalovirus (strain PT) (HHV-5).